A 358-amino-acid polypeptide reads, in one-letter code: Protein-glutamate methylesterase/protein-glutamine glutaminase 3 (358 aa).

The 117-residue stretch at 2 to 118 (KILVVDDSAL…CGRLQEVAPL (117 aa)) folds into the Response regulatory domain. A 4-aspartylphosphate modification is found at aspartate 52. The 171-residue stretch at 155–325 (NNEDHQLAIM…VPSMPEALLK (171 aa)) folds into the CheB-type methylesterase domain. Active-site residues include serine 167, histidine 194, and aspartate 291.

Belongs to the CheB family. Phosphorylated by CheA. Phosphorylation of the N-terminal regulatory domain activates the methylesterase activity.

It localises to the cytoplasm. It carries out the reaction [protein]-L-glutamate 5-O-methyl ester + H2O = L-glutamyl-[protein] + methanol + H(+). The enzyme catalyses L-glutaminyl-[protein] + H2O = L-glutamyl-[protein] + NH4(+). Involved in chemotaxis. Part of a chemotaxis signal transduction system that modulates chemotaxis in response to various stimuli. Catalyzes the demethylation of specific methylglutamate residues introduced into the chemoreceptors (methyl-accepting chemotaxis proteins or MCP) by CheR. Also mediates the irreversible deamidation of specific glutamine residues to glutamic acid. This is Protein-glutamate methylesterase/protein-glutamine glutaminase 3 from Vibrio cholerae serotype O1 (strain ATCC 39315 / El Tor Inaba N16961).